The primary structure comprises 303 residues: Lysosomal amino acid transporter 1 homolog (303 aa).

The Lumenal portion of the chain corresponds to Met1–Val38. N-linked (GlcNAc...) asparagine glycosylation is present at Asn13. Positions Arg36 to Tyr102 constitute a PQ-loop 1 domain. Residues Gly39–Phe59 traverse the membrane as a helical segment. The Cytoplasmic portion of the chain corresponds to Tyr60–Ser73. Residues Ile74 to Ala94 form a helical membrane-spanning segment. The Lumenal portion of the chain corresponds to Asn95–Gln96. The chain crosses the membrane as a helical span at residues Leu97–Leu117. Topologically, residues Tyr118 to Thr131 are cytoplasmic. A helical transmembrane segment spans residues Ala132–Leu152. The Lumenal portion of the chain corresponds to Ser153–Pro182. The chain crosses the membrane as a helical span at residues Ile183–Cys203. The PQ-loop 2 domain maps to Thr186–Glu251. Residues Ser204–Gly220 are Cytoplasmic-facing. Residues Val221–Leu241 form a helical membrane-spanning segment. Residues Leu242–Pro260 are Lumenal-facing. The helical transmembrane segment at Trp261–Ala281 threads the bilayer. The Cytoplasmic segment spans residues Tyr282 to Ser303. The Di-leucine motif signature appears at Leu296–Leu297.

The protein belongs to the laat-1 family.

The protein resides in the lysosome membrane. Amino acid transporter that specifically mediates the pH-dependent export of the cationic amino acids arginine, histidine and lysine from lysosomes. The protein is Lysosomal amino acid transporter 1 homolog (SLC66A1) of Gallus gallus (Chicken).